A 121-amino-acid polypeptide reads, in one-letter code: Large ribosomal subunit protein uL14 (121 aa).

It belongs to the universal ribosomal protein uL14 family. As to quaternary structure, part of the 50S ribosomal subunit. Forms a cluster with proteins L3 and L19. In the 70S ribosome, L14 and L19 interact and together make contacts with the 16S rRNA in bridges B5 and B8.

Its function is as follows. Binds to 23S rRNA. Forms part of two intersubunit bridges in the 70S ribosome. In Synechococcus sp. (strain RCC307), this protein is Large ribosomal subunit protein uL14.